The sequence spans 189 residues: Transcription factor FapR (189 aa).

This sequence belongs to the FapR family.

Transcriptional factor involved in regulation of membrane lipid biosynthesis by repressing genes involved in fatty acid and phospholipid metabolism. The sequence is that of Transcription factor FapR from Exiguobacterium sp. (strain ATCC BAA-1283 / AT1b).